The primary structure comprises 277 residues: Coiled-coil domain-containing protein 117 (277 aa).

The tract at residues 1–69 (MAALGRPFSG…GRVSIHCRKK (69 aa)) is disordered. Low complexity predominate over residues 26–37 (FAGRAFPPGAAG). Arginine 47 is subject to Omega-N-methylarginine. The residue at position 52 (serine 52) is a Phosphoserine. A compositionally biased stretch (basic residues) spans 58–69 (ARGRVSIHCRKK). Residues 139 to 166 (QCEVARRRLQEIEDRIIDEDEEVESDRN) are a coiled coil. Residues 212–277 (LPELLPEKPK…ATSTEEEMEL (66 aa)) form a disordered region.

Interacts with CIAO2B; the interaction is direct. Interacts with MMS19; the interaction is indirect.

The protein resides in the cytoplasm. Its subcellular location is the cytoskeleton. It is found in the spindle. The protein localises to the nucleus. Facilitates DNA repair, cell cycle progression, and cell proliferation through its interaction with CIAO2B. In Mus musculus (Mouse), this protein is Coiled-coil domain-containing protein 117.